Reading from the N-terminus, the 209-residue chain is Vacuolar protein sorting-associated protein 28 homolog (209 aa).

Residues 1–105 enclose the VPS28 N-terminal domain; the sequence is MSQNSNLMRE…REGRPITVKD (105 aa). A VPS28 C-terminal domain is found at 109-205; the sequence is NVLKHIASIV…AYQSFQKALN (97 aa).

It belongs to the VPS28 family. Component of the ESCRT-I complex (endosomal sorting complex required for transport I).

Its subcellular location is the endosome. Its function is as follows. Component of the ESCRT-I complex, a regulator of vesicular trafficking process. This Caenorhabditis briggsae protein is Vacuolar protein sorting-associated protein 28 homolog.